We begin with the raw amino-acid sequence, 260 residues long: Snake venom serine protease pallabin (260 aa).

The signal sequence occupies residues 1–18 (MVLIRVLANLLILQLSYA). The propeptide occupies 19–24 (QKSSKL). The 227-residue stretch at 25-251 (VIGGDECNIN…HLDWIENIIA (227 aa)) folds into the Peptidase S1 domain. Disulfide bonds link Cys31/Cys163, Cys50/Cys66, Cys98/Cys258, Cys142/Cys212, Cys174/Cys191, and Cys202/Cys227. The active-site Charge relay system is the His65. The N-linked (GlcNAc...) asparagine glycan is linked to Asn103. Asp110 (charge relay system) is an active-site residue. The Charge relay system role is filled by Ser206.

Belongs to the peptidase S1 family. Snake venom subfamily. As to quaternary structure, monomer. Expressed by the venom gland.

Its subcellular location is the secreted. Functionally, snake venom serine protease that may act in the hemostasis system of the prey. In Gloydius halys (Chinese water mocassin), this protein is Snake venom serine protease pallabin (JZTHR5).